Reading from the N-terminus, the 386-residue chain is Succinate--CoA ligase [ADP-forming] subunit beta (386 aa).

Positions 9–244 constitute an ATP-grasp domain; the sequence is KDLLTSYQLP…PSQENIRDVL (236 aa). ATP is bound by residues Lys-46, 53-55, Val-102, and Glu-107; that span reads GRG. Residues Asn-199 and Asp-213 each contribute to the Mg(2+) site. Residues Asn-264 and 321–323 each bind substrate; that span reads GIM.

The protein belongs to the succinate/malate CoA ligase beta subunit family. In terms of assembly, heterotetramer of two alpha and two beta subunits. It depends on Mg(2+) as a cofactor.

The catalysed reaction is succinate + ATP + CoA = succinyl-CoA + ADP + phosphate. It catalyses the reaction GTP + succinate + CoA = succinyl-CoA + GDP + phosphate. The protein operates within carbohydrate metabolism; tricarboxylic acid cycle; succinate from succinyl-CoA (ligase route): step 1/1. Succinyl-CoA synthetase functions in the citric acid cycle (TCA), coupling the hydrolysis of succinyl-CoA to the synthesis of either ATP or GTP and thus represents the only step of substrate-level phosphorylation in the TCA. The beta subunit provides nucleotide specificity of the enzyme and binds the substrate succinate, while the binding sites for coenzyme A and phosphate are found in the alpha subunit. The chain is Succinate--CoA ligase [ADP-forming] subunit beta from Chlamydia muridarum (strain MoPn / Nigg).